Here is a 368-residue protein sequence, read N- to C-terminus: snRNA-activating protein complex subunit 1 (368 aa).

Positions 1 to 168 (MGTPPGLQTD…EEFKDPSDRV (168 aa)) are SNAPC3-binding. The interval 164-268 (PSDRVMKLIT…AESLAKIKSK (105 aa)) is SNAPC4-binding. Disordered stretches follow at residues 224 to 257 (QQWH…ERCE) and 275 to 368 (QASK…RRKH). Over residues 238–257 (KTNDGEEKMEGNSQETERCE) the composition is skewed to basic and acidic residues. Phosphoserine is present on residues S289 and S290.

As to quaternary structure, part of the SNAPc complex composed of 5 subunits: SNAPC1, SNAPC2, SNAPC3, SNAPC4 and SNAPC5. SNAPC1 interacts with SNAPC3, SNAPC4 and TBP.

The protein localises to the nucleus. Its function is as follows. Part of the SNAPc complex required for the transcription of both RNA polymerase II and III small-nuclear RNA genes. Binds to the proximal sequence element (PSE), a non-TATA-box basal promoter element common to these 2 types of genes. Recruits TBP and BRF2 to the U6 snRNA TATA box. In Homo sapiens (Human), this protein is snRNA-activating protein complex subunit 1 (SNAPC1).